Reading from the N-terminus, the 152-residue chain is Large ribosomal subunit protein uL13 (152 aa).

This sequence belongs to the universal ribosomal protein uL13 family. Part of the 50S ribosomal subunit.

In terms of biological role, this protein is one of the early assembly proteins of the 50S ribosomal subunit, although it is not seen to bind rRNA by itself. It is important during the early stages of 50S assembly. The chain is Large ribosomal subunit protein uL13 from Neorickettsia sennetsu (strain ATCC VR-367 / Miyayama) (Ehrlichia sennetsu).